The following is a 220-amino-acid chain: CRISPR system Cms endoribonuclease Csm3 (220 aa).

The protein belongs to the CRISPR-associated Csm3 family. As to quaternary structure, part of the Csm effector complex that includes at least Cas10(1), Csm2(3), Csm3(5), Csm4(1), Csm5(1) and mature crRNA. The Csm complex is elongated and slightly twisted with a maximal length of 215 Angstroms and a diameter of 75-80 Angstroms. It has been modeled to have a central protein filamant of Csm3 subunits along which the dsRNA helix of paired crRNA and target RNA binds. The filament is capped at one end by Cas10 and Csm4 and at the other end by Csm5; ssDNA is thought to bind to the N-terminal HD domain of Cas10. Csm with a precursor crRNA does not include Csm5, while Cas6, the enzyme probably involved in pre-crRNA processing, is found associated with a subset of the Csm complex. Requires a metal cation as cofactor.

Its activity is regulated as follows. Target ssRNase is inhibited by EDTA. CRISPR (clustered regularly interspaced short palindromic repeat) is an adaptive immune system that provides protection against mobile genetic elements (viruses, transposable elements and conjugative plasmids). CRISPR clusters contain spacers, sequences complementary to antecedent mobile elements, and target invading nucleic acids. CRISPR clusters are transcribed and processed into CRISPR RNA (crRNA). The type III-A Csm effector complex binds crRNA and acts as a crRNA-guided RNase, DNase and cyclic oligoadenylate synthase; binding of target RNA cognate to the crRNA is required for all activities. In a heterologous host this Csm effector complex restricts ssRNA phage MS2, suggesting it may target RNA viruses in vivo. Its function is as follows. Csm functions as a non-specific ssDNase. Base-pairing between crRNA and target RNA to form a ternary Csm complex activates a ssDNase activity; target RNA cleavage suppresses the ssDNase, a temporal control that prevents uncontrolled DNA degradation. Viral RNA transcripts probably tether the Csm complex to the viral genome, recruiting Cas10 ssDNA activity which is able to degrade DNA in the transcription bubble, spatially controlling the DNase activity. Functionally, this subunit has the target ssRNA endonuclease activity; it cleaves multiple sites in the target RNA at 6 nucleotide intervals. The number of cleavage sites in the target RNA correlates with the number of Csm3 subunits in the Csm effector complex. In the Csm complex target RNA and ssDNA are cleaved simultaneously, although RNase activity (of Csm3) is much faster. RNA cleavage by Csm3 is not required for ssDNase activity as Csm complex with inactive Csm3 still has ssDNase activity; however as the cleaved target RNA products dissociate away ssDNase activity decreases. This Streptococcus thermophilus protein is CRISPR system Cms endoribonuclease Csm3.